Here is a 360-residue protein sequence, read N- to C-terminus: Protein Wnt-2 (360 aa).

A signal peptide spans 1–25; it reads MNAPLGGIWLWLPLLLTWLTPEVNS. Disulfide bonds link C76–C87, C127–C135, C137–C157, C206–C220, C208–C215, C278–C309, C294–C304, C308–C348, C324–C339, C326–C336, and C331–C332. S212 is lipidated: O-palmitoleoyl serine; by PORCN. N-linked (GlcNAc...) asparagine glycosylation is present at N295.

It belongs to the Wnt family. Post-translationally, palmitoleoylation is required for efficient binding to frizzled receptors. Depalmitoleoylation leads to Wnt signaling pathway inhibition.

The protein resides in the secreted. It localises to the extracellular space. The protein localises to the extracellular matrix. Its function is as follows. Ligand for members of the frizzled family of seven transmembrane receptors. Functions in the canonical Wnt signaling pathway that results in activation of transcription factors of the TCF/LEF family. Functions as a upstream regulator of FGF10 expression. Plays an important role in embryonic lung development. May contribute to embryonic brain development by regulating the proliferation of dopaminergic precursors and neurons. This Nomascus leucogenys (Northern white-cheeked gibbon) protein is Protein Wnt-2 (WNT2).